We begin with the raw amino-acid sequence, 65 residues long: Small ribosomal subunit protein uS10 (65 aa).

It belongs to the universal ribosomal protein uS10 family. As to quaternary structure, part of the 30S ribosomal subunit.

In terms of biological role, involved in the binding of tRNA to the ribosomes. This Desulfurococcus mucosus (Desulfurococcus mobilis) protein is Small ribosomal subunit protein uS10 (rps10).